Reading from the N-terminus, the 562-residue chain is MRSNMIKKGPEQAPARSLLHATGQIKSPEDMNKPFIAICNSYIDIVPGHVHLRELADIAKEAIREAGGIPFEFNTIGVDDGIAMGHIGMRYSLPSREIIADAAETVINAHWFDGVFYIPNCDKITPGMLLAAVRTNVPAIFCSGGPMKAGLSATGKALTLSSMFEAVGAFKEGTLTKEDFLDMEQNACPTCGSCAGMFTANSMNCLMEVLGLALPFNGTALAVSKERRALIRESAFKLMDLVKRDIKPKDIVTKEAIDDAFALDMAMGGSTNTVLHTLALANEAGIDYDLERINEIAEKTPYLSKIAPSSSYSMHDVHTAGGVPAIINELMKREGILHPDRMTVTGDTLRDNNAAYTIQNEEVIHTLDNPYSEHGGLSMLHGNIAPLGGVIKVGGVDPSIQTFTGAAICFDSHDAAVAAIDNHTVRPGHVVVIRYEGPKGGPGMPEMLAPTSSIVGRGLGKEVALITDGRFSGATRGIAVGHISPEAAALGPIALIEDGDMVTIDLVHRTLNVDVTDDELKQRKARLQPFKAKVKSGYLARYTALVTSANTGGVMQIPEHLL.

Residue Asp-80 participates in Mg(2+) binding. Cys-121 is a [2Fe-2S] cluster binding site. Residues Asp-122 and Lys-123 each coordinate Mg(2+). Lys-123 is subject to N6-carboxylysine. Residue Cys-194 coordinates [2Fe-2S] cluster. Glu-446 lines the Mg(2+) pocket. The active-site Proton acceptor is the Ser-472.

Belongs to the IlvD/Edd family. In terms of assembly, homodimer. [2Fe-2S] cluster is required as a cofactor. The cofactor is Mg(2+).

It carries out the reaction (2R)-2,3-dihydroxy-3-methylbutanoate = 3-methyl-2-oxobutanoate + H2O. The enzyme catalyses (2R,3R)-2,3-dihydroxy-3-methylpentanoate = (S)-3-methyl-2-oxopentanoate + H2O. It functions in the pathway amino-acid biosynthesis; L-isoleucine biosynthesis; L-isoleucine from 2-oxobutanoate: step 3/4. The protein operates within amino-acid biosynthesis; L-valine biosynthesis; L-valine from pyruvate: step 3/4. In terms of biological role, functions in the biosynthesis of branched-chain amino acids. Catalyzes the dehydration of (2R,3R)-2,3-dihydroxy-3-methylpentanoate (2,3-dihydroxy-3-methylvalerate) into 2-oxo-3-methylpentanoate (2-oxo-3-methylvalerate) and of (2R)-2,3-dihydroxy-3-methylbutanoate (2,3-dihydroxyisovalerate) into 2-oxo-3-methylbutanoate (2-oxoisovalerate), the penultimate precursor to L-isoleucine and L-valine, respectively. In Macrococcus caseolyticus (strain JCSC5402) (Macrococcoides caseolyticum), this protein is Dihydroxy-acid dehydratase.